We begin with the raw amino-acid sequence, 308 residues long: Hydroxyacylglutathione hydrolase, mitochondrial (308 aa).

Residues 1 to 13 (MVVGRGLLGRRSL) constitute a mitochondrion transit peptide. Positions 102, 104, 106, and 107 each coordinate Zn(2+). Position 116 is an N6-acetyllysine (Lys116). Zn(2+)-binding residues include His158 and Asp182. Substrate is bound by residues 191–193 (KFY) and 221–223 (HEY). Residue His221 coordinates Zn(2+). An N6-acetyllysine; alternate modification is found at Lys229. Residue Lys229 is modified to N6-succinyllysine; alternate. 297–300 (RREK) is a substrate binding site.

Belongs to the metallo-beta-lactamase superfamily. Glyoxalase II family. Monomer. Zn(2+) serves as cofactor. As to expression, expressed in liver and kidney.

Its subcellular location is the mitochondrion matrix. The protein resides in the cytoplasm. The catalysed reaction is an S-(2-hydroxyacyl)glutathione + H2O = a 2-hydroxy carboxylate + glutathione + H(+). It catalyses the reaction (R)-S-lactoylglutathione + H2O = (R)-lactate + glutathione + H(+). It functions in the pathway secondary metabolite metabolism; methylglyoxal degradation; (R)-lactate from methylglyoxal: step 2/2. Its function is as follows. Thiolesterase that catalyzes the hydrolysis of S-D-lactoyl-glutathione to form glutathione and D-lactic acid. The chain is Hydroxyacylglutathione hydrolase, mitochondrial (HAGH) from Homo sapiens (Human).